We begin with the raw amino-acid sequence, 360 residues long: Type II methyltransferase M.BglII (360 aa).

The interval 316-341 is disordered; that stretch reads TRQRKGSKPSLDSKAHPEEHHKKEIV. The segment covering 326 to 341 has biased composition (basic and acidic residues); the sequence is LDSKAHPEEHHKKEIV.

It belongs to the N(4)/N(6)-methyltransferase family. N(4) subfamily.

It catalyses the reaction a 2'-deoxycytidine in DNA + S-adenosyl-L-methionine = an N(4)-methyl-2'-deoxycytidine in DNA + S-adenosyl-L-homocysteine + H(+). In terms of biological role, a beta subtype methylase, recognizes the double-stranded sequence 5'-AGATCT-3', methylates C-5 on both strands, and protects the DNA from cleavage by the BglII endonuclease. This chain is Type II methyltransferase M.BglII, found in Bacillus subtilis.